An 82-amino-acid polypeptide reads, in one-letter code: Mitotic-spindle organizing protein 1 (82 aa).

Ala-2 carries the N-acetylalanine modification.

The protein belongs to the MOZART1 family. In terms of assembly, associates with the gamma-tubulin ring complex (gTuRC) consisting of TUBGCP2, TUBGCP3, TUBGCP4, TUBGCP5 and TUBGCP6 and gamma-tubulin TUBG1 or TUBG2; within the complex, interacts with TUBGCP3 and TUBGCP6 to form a luminal bridge with actin that stabilizes the initial structure during complex assembly. Interacts with TUBG1.

The protein resides in the cytoplasm. It localises to the cytoskeleton. Its subcellular location is the microtubule organizing center. It is found in the centrosome. The protein localises to the spindle. Functionally, required for the recruitment and the assembly of the gamma-tubulin ring complex (gTuRC) at the centrosome. The gTuRC regulates the minus-end nucleation of alpha-beta tubulin heterodimers that grow into microtubule protafilaments, a critical step in centrosome duplication and spindle formation. This is Mitotic-spindle organizing protein 1 (MZT1) from Homo sapiens (Human).